The chain runs to 86 residues: Small ribosomal subunit protein uS17 (86 aa).

This sequence belongs to the universal ribosomal protein uS17 family. As to quaternary structure, part of the 30S ribosomal subunit.

In terms of biological role, one of the primary rRNA binding proteins, it binds specifically to the 5'-end of 16S ribosomal RNA. The protein is Small ribosomal subunit protein uS17 of Methylococcus capsulatus (strain ATCC 33009 / NCIMB 11132 / Bath).